A 677-amino-acid chain; its full sequence is Methionine--tRNA ligase (677 aa).

Positions 15–25 (PYANGSIHLGH) match the 'HIGH' region motif. Positions 146, 149, 159, and 162 each coordinate Zn(2+). Residues 333–337 (KMSKS) carry the 'KMSKS' region motif. Lys-336 is an ATP binding site. Residues 575–677 (DFAKVDLRVA…AGAKPGHQVK (103 aa)) enclose the tRNA-binding domain.

The protein belongs to the class-I aminoacyl-tRNA synthetase family. MetG type 1 subfamily. As to quaternary structure, homodimer. Zn(2+) is required as a cofactor.

Its subcellular location is the cytoplasm. The enzyme catalyses tRNA(Met) + L-methionine + ATP = L-methionyl-tRNA(Met) + AMP + diphosphate. In terms of biological role, is required not only for elongation of protein synthesis but also for the initiation of all mRNA translation through initiator tRNA(fMet) aminoacylation. This is Methionine--tRNA ligase from Escherichia coli O81 (strain ED1a).